The primary structure comprises 297 residues: Ectoine dioxygenase (297 aa).

Q131 contributes to the L-ectoine binding site. K137 contributes to the 2-oxoglutarate binding site. Fe cation-binding residues include H148, D150, and H249.

It belongs to the PhyH family. EctD subfamily. In terms of assembly, homodimer. It depends on Fe(2+) as a cofactor.

It catalyses the reaction L-ectoine + 2-oxoglutarate + O2 = 5-hydroxyectoine + succinate + CO2. In terms of biological role, involved in the biosynthesis of 5-hydroxyectoine, called compatible solute, which helps organisms to survive extreme osmotic stress by acting as a highly soluble organic osmolyte. Catalyzes the 2-oxoglutarate-dependent selective hydroxylation of L-ectoine to yield (4S,5S)-5-hydroxyectoine. The protein is Ectoine dioxygenase of Streptomyces anulatus (Streptomyces chrysomallus).